Consider the following 552-residue polypeptide: Small ribosomal subunit protein bS1 (552 aa).

6 consecutive S1 motif domains span residues 31-101 (TIKE…ISQQ), 116-179 (NAII…ISRK), 200-268 (TEPV…LSIK), 285-355 (GYAI…VSLK), 372-440 (GDIV…LSAK), and 457-521 (DSVI…ASVH).

It belongs to the bacterial ribosomal protein bS1 family.

Its function is as follows. Binds mRNA; thus facilitating recognition of the initiation point. It is needed to translate mRNA with a short Shine-Dalgarno (SD) purine-rich sequence. The chain is Small ribosomal subunit protein bS1 (rpsA) from Helicobacter pylori (strain J99 / ATCC 700824) (Campylobacter pylori J99).